Consider the following 382-residue polypeptide: Sialidase (382 aa).

R37 contributes to the substrate binding site. A disulfide bridge connects residues C42 and C103. The active-site Proton acceptor is D62. 3 BNR repeats span residues 71-82 (ARSTDGGKTWNK), 145-156 (YKSTDDGVTFSK), and 210-220 (IYSTDGITWSL). Residue R246 coordinates substrate. One copy of the BNR 4 repeat lies at 254–265 (FETKDFGKTWTE). R309 is a binding site for substrate. Y342 functions as the Nucleophile in the catalytic mechanism. The active site involves E361.

The protein belongs to the glycosyl hydrolase 33 family. As to quaternary structure, monomer.

The catalysed reaction is Hydrolysis of alpha-(2-&gt;3)-, alpha-(2-&gt;6)-, alpha-(2-&gt;8)- glycosidic linkages of terminal sialic acid residues in oligosaccharides, glycoproteins, glycolipids, colominic acid and synthetic substrates.. Cleaves the terminal sialic acid (N-acetyl neuraminic acid) from carbohydrate chains in glycoproteins providing free sialic acid which can be used as carbon and energy sources. Sialidases have been suggested to be pathogenic factors in microbial infections. This chain is Sialidase (nanH), found in Salmonella typhimurium (strain LT2 / SGSC1412 / ATCC 700720).